A 61-amino-acid polypeptide reads, in one-letter code: Small ribosomal subunit protein uS14 (61 aa).

4 residues coordinate Zn(2+): C24, C27, C40, and C43.

Belongs to the universal ribosomal protein uS14 family. Zinc-binding uS14 subfamily. As to quaternary structure, part of the 30S ribosomal subunit. Contacts proteins S3 and S10. Zn(2+) is required as a cofactor.

Its function is as follows. Binds 16S rRNA, required for the assembly of 30S particles and may also be responsible for determining the conformation of the 16S rRNA at the A site. The protein is Small ribosomal subunit protein uS14 of Clostridium novyi (strain NT).